A 208-amino-acid polypeptide reads, in one-letter code: Large ribosomal subunit protein uL4 (208 aa).

Residues 45 to 83 (RQGTHKSKTRAEVRGGGRKPYRQKGTGNARQGSTRSPLM) are disordered. Over residues 69–80 (GTGNARQGSTRS) the composition is skewed to polar residues.

This sequence belongs to the universal ribosomal protein uL4 family. Part of the 50S ribosomal subunit.

One of the primary rRNA binding proteins, this protein initially binds near the 5'-end of the 23S rRNA. It is important during the early stages of 50S assembly. It makes multiple contacts with different domains of the 23S rRNA in the assembled 50S subunit and ribosome. In terms of biological role, forms part of the polypeptide exit tunnel. In Chlorobium luteolum (strain DSM 273 / BCRC 81028 / 2530) (Pelodictyon luteolum), this protein is Large ribosomal subunit protein uL4.